The chain runs to 203 residues: Twist-related protein 1 (203 aa).

Positions 1-18 (MMQDVSSSPVSPADDSLS) are enriched in low complexity. Positions 1-106 (MMQDVSSSPV…GGGSPQSYEE (106 aa)) are disordered. Residues 34–43 (RGGRKRRSSR) are compositionally biased toward basic residues. Composition is skewed to gly residues over residues 46-65 (AGGGAGPGGAAGGGVGGGDE) and 80-100 (GCGGGGGSAGGGGGSSSGGGS). The 52-residue stretch at 109–160 (TQRVMANVRERQRTQSLNEAFAALRKIIPTLPSDKLSKIQTLKLAARYIDFL) folds into the bHLH domain. The segment at 162 to 192 (QVLQSDELDSKMASCSYVAHERLSYAFSVWR) is sufficient for transactivation activity.

As to quaternary structure, efficient DNA binding requires dimerization with another bHLH protein. Homodimer or heterodimer with E proteins such as TCF3. ID1 binds preferentially to TCF3 but does not interact efficiently with TWIST1 so ID1 levels control the amount of TCF3 available to dimerize with TWIST and thus determine the type of dimer formed.

The protein resides in the nucleus. Acts as a transcriptional regulator. Inhibits myogenesis by sequestrating E proteins, inhibiting trans-activation by MEF2, and inhibiting DNA-binding by MYOD1 through physical interaction. This interaction probably involves the basic domains of both proteins. Also represses expression of pro-inflammatory cytokines such as TNFA and IL1B. Regulates cranial suture patterning and fusion. Activates transcription as a heterodimer with E proteins. Regulates gene expression differentially, depending on dimer composition. Homodimers induce expression of FGFR2 and POSTN while heterodimers repress FGFR2 and POSTN expression and induce THBS1 expression. Heterodimerization is also required for osteoblast differentiation. Represses the activity of the circadian transcriptional activator: NPAS2-BMAL1 heterodimer. This is Twist-related protein 1 (TWIST1) from Saguinus oedipus (Cotton-top tamarin).